A 121-amino-acid polypeptide reads, in one-letter code: N-alpha-acetyltransferase 38, NatC auxiliary subunit (121 aa).

The Sm domain maps to 40 to 113 (PGRRKLQKWL…IVSLSIDEPD (74 aa)).

It belongs to the snRNP Sm proteins family. In terms of assembly, component of the N-terminal acetyltransferase C (NatC) complex, which is composed of Naa35, Sbat/Naa38 and Naa30A. Interacts with Smn and Hez; along with Hez and Vlet, may form an accessory subcomplex involved in SMN complex function.

It is found in the cytoplasm. Its subcellular location is the nucleus. Functionally, auxiliary component of the N-terminal acetyltransferase C (NatC) complex which catalyzes acetylation of N-terminal methionine residues. May have an accessory function in the survival motor neuron (SMN) complex. The polypeptide is N-alpha-acetyltransferase 38, NatC auxiliary subunit (Drosophila melanogaster (Fruit fly)).